We begin with the raw amino-acid sequence, 704 residues long: Elongation factor G (704 aa).

The region spanning 10–290 (KKVRNIGIMA…AVVDYLPSPL (281 aa)) is the tr-type G domain. Residues 19–26 (AHIDAGKT), 83–87 (DTPGH), and 137–140 (NKMD) contribute to the GTP site.

The protein belongs to the TRAFAC class translation factor GTPase superfamily. Classic translation factor GTPase family. EF-G/EF-2 subfamily.

The protein localises to the cytoplasm. In terms of biological role, catalyzes the GTP-dependent ribosomal translocation step during translation elongation. During this step, the ribosome changes from the pre-translocational (PRE) to the post-translocational (POST) state as the newly formed A-site-bound peptidyl-tRNA and P-site-bound deacylated tRNA move to the P and E sites, respectively. Catalyzes the coordinated movement of the two tRNA molecules, the mRNA and conformational changes in the ribosome. This is Elongation factor G from Kocuria rhizophila (strain ATCC 9341 / DSM 348 / NBRC 103217 / DC2201).